The chain runs to 463 residues: MGKEKTHINIVVIGHVDSGKSTTTGHLIYKCGGIDKRTIEKFEKEAAEMGKGSFKYAWVLDKLKAERERGITIDISLWKFETTKYYITIIDAPGHRDFIKNMITGTSQADCAVLIVAAGVGEFEAGISKNGQTREHALLAYTLGVKQLIVGVNKMDSTEPAYSEKRYDEIVKEVSAYIKKIGYNPATVPFVPISGWHGDNMLEPSPNMPWFKGWKVERKEGNASGVSLLEALDTILPPTRPTDKPLRLPLQDVYKIGGIGTVPVGRVETGILRPGMVVTFAPVNITTEVKSVEMHHEALSEALPGDNVGFNVKNVSVKDIRRGNVCGDSKSDPPQEAAQFTSQVIILNHPGQISAGYSPVIDCHTAHIACKFAELKEKIDRRSGKKLEDNPKSLKSGDAAIVEMVPGKPMCVESFSQYPPLGRFAVRDMRQTVAVGVIKNVEKKSGGAGKVTKSAQKAQKAGK.

A N,N,N-trimethylglycine modification is found at Gly2. The tr-type G domain occupies 5-242 (KTHINIVVIG…DTILPPTRPT (238 aa)). The segment at 14 to 21 (GHVDSGKS) is G1. Residues Asp17, Ser18, Gly19, Lys20, Ser21, and Thr22 each contribute to the GTP site. Asp17 contacts Mg(2+). The residue at position 36 (Lys36) is an N6,N6,N6-trimethyllysine; alternate. At Lys36 the chain carries N6,N6-dimethyllysine; alternate. An N6-methyllysine; alternate modification is found at Lys36. The residue at position 55 (Lys55) is an N6,N6,N6-trimethyllysine. Lys55 bears the N6,N6-dimethyllysine mark. Residues 70 to 74 (GITID) are G2. An N6,N6,N6-trimethyllysine modification is found at Lys79. A G3 region spans residues 91-94 (DAPG). 3 residues coordinate GTP: Asn153, Lys154, and Asp156. Residues 153–156 (NKMD) are G4. A Phosphoserine modification is found at Ser163. Lys165 is subject to N6,N6-dimethyllysine; alternate. Residue Lys165 is modified to N6-methyllysine; alternate. N6,N6,N6-trimethyllysine; alternate; by EEF1AKMT3 is present on Lys165. Lys179 bears the N6-acetyllysine mark. Residues Ser194, Gly195, and Trp196 each contribute to the GTP site. A G5 region spans residues 194 to 196 (SGW). At Ser224 the chain carries Phosphoserine. A Phosphothreonine modification is found at Thr239. Glu301 and Glu374 each carry 5-glutamyl glycerylphosphorylethanolamine. Lys439 is subject to N6-acetyllysine. The tract at residues 444–463 (KSGGAGKVTKSAQKAQKAGK) is disordered.

The protein belongs to the TRAFAC class translation factor GTPase superfamily. Classic translation factor GTPase family. EF-Tu/EF-1A subfamily. Homodimer; arranged in a 'head to tail' dimer configuration. Post-translationally, trimethylated at Lys-165 by EEF1AKMT3. Mono-, di-, and trimethylated at Lys-36 by EEF1AKMT4; trimethylated form is predominant. Methylation by EEF1AKMT4 contributes to the fine-tuning of translation rates for a subset of tRNAs. Trimethylated at the N-terminus and dimethylated at Lys-55 by METTL13.

The protein localises to the endoplasmic reticulum membrane. It catalyses the reaction GTP + H2O = GDP + phosphate + H(+). Functionally, translation elongation factor that catalyzes the GTP-dependent binding of aminoacyl-tRNA (aa-tRNA) to the A-site of ribosomes during the elongation phase of protein synthesis. Base pairing between the mRNA codon and the aa-tRNA anticodon promotes GTP hydrolysis, releasing the aa-tRNA from EEF1A1 and allowing its accommodation into the ribosome. The growing protein chain is subsequently transferred from the P-site peptidyl tRNA to the A-site aa-tRNA, extending it by one amino acid through ribosome-catalyzed peptide bond formation. The polypeptide is Elongation factor 1-alpha 2 (EEF1A2) (Bos taurus (Bovine)).